The following is a 420-amino-acid chain: Tyrosine--tRNA ligase (420 aa).

Residue Tyr-33 participates in L-tyrosine binding. A 'HIGH' region motif is present at residues 38–47 (PTADSLHVGH). Positions 167 and 171 each coordinate L-tyrosine. The short motif at 227–231 (KFGKT) is the 'KMSKS' region element. Lys-230 is a binding site for ATP. The region spanning 353–419 (LTVADLLVKV…GKRNYALVKV (67 aa)) is the S4 RNA-binding domain.

This sequence belongs to the class-I aminoacyl-tRNA synthetase family. TyrS type 1 subfamily. In terms of assembly, homodimer.

It is found in the cytoplasm. The enzyme catalyses tRNA(Tyr) + L-tyrosine + ATP = L-tyrosyl-tRNA(Tyr) + AMP + diphosphate + H(+). Catalyzes the attachment of tyrosine to tRNA(Tyr) in a two-step reaction: tyrosine is first activated by ATP to form Tyr-AMP and then transferred to the acceptor end of tRNA(Tyr). This chain is Tyrosine--tRNA ligase, found in Anaeromyxobacter dehalogenans (strain 2CP-C).